The chain runs to 581 residues: MAVAGAVSGEPLVHWCTQQLRKTFGLDVSEEIIQYVLSIESAEEIREYVTDLLQGNEGKKGQFIEELITKWQKNDQELISDPLQQCFKKDEILDGQKSGDHLKRGRKKGRNRQEVPAFTEPDTTAEVKTPFDLAKAQENSNSVKKKTKFVNLYTREGQDRLAVLLPGRHPCDCLGQKHKLINNCLICGRIVCEQEGSGPCLFCGTLVCTHEEQDILQRDSNKSQKLLKKLMSGVENSGKVDISTKDLLPHQELRIKSGLEKAIKHKDKLLEFDRTSIRRTQVIDDESDYFASDSNQWLSKLERETLQKREEELRELRHASRLSKKVTIDFAGRKILEEENSLAEYHSRLDETIQAIANGTLNQPLTKLDRSSEEPLGVLVNPNMYQSPPQWVDHTGAASQKKAFRSSGFGLEFNSFQHQLRIQDQEFQEGFDGGWCLSVHQPWASLLVRGIKRVEGRSWYTPHRGRLWIAATAKKPSPQEVSELQATYRLLRGKDVEFPNDYPSGCLLGCVDLIDCLSQKQFKEQFPDISQESDSPFVFICKNPQEMVVKFPIKGNPKIWKLDSKIHQGAKKGLMKQNKAV.

A2 carries the post-translational modification N-acetylalanine. A disordered region spans residues 97 to 118 (KSGDHLKRGRKKGRNRQEVPAF). The segment at 171–187 (CDCLGQKHKLINNCLIC) adopts a C4-type zinc-finger fold. A mediates interaction with DDRGK1 region spans residues 200 to 300 (CLFCGTLVCT…ASDSNQWLSK (101 aa)). Residue S276 is modified to Phosphoserine. The residue at position 289 (Y289) is a Phosphotyrosine. The interval 300-400 (KLERETLQKR…WVDHTGAASQ (101 aa)) is mediates interaction with UFL1. Residues K324, K325, and K334 each participate in a glycyl lysine isopeptide (Lys-Gly) (interchain with G-Cter in UFM1) cross-link. S341 carries the post-translational modification Phosphoserine. K367 participates in a covalent cross-link: Glycyl lysine isopeptide (Lys-Gly) (interchain with G-Cter in UFM1). An ASCH domain is found at 437 to 531 (LSVHQPWASL…FKEQFPDISQ (95 aa)).

Interacts with the thyroid hormone receptor/TR (via the ligand-binding domain); this interaction requires the presence of thyroid hormone. Interacts with the androgen receptor/AR; in an androgen, testosterone and dihydrotestosterone-dependent manner. Interacts with ESR1 (estrogen ligand-bound); competes with UFSP2. Interacts with UFSP2; competes with ligand-bound ESR1. Interacts with DDRGK1 and UFL1; the interaction with DDRGK1 is direct. Interacts with NCOA1. Interacts with EP300. Part of the ASC-1 complex, that contains TRIP4, ASCC1, ASCC2 and ASCC3. Identified in the RQT (ribosome quality control trigger) complex, that contains ASCC2, ASCC3 and TRIP4. Interacts with NEK6. Interacts with CSRP1. Interacts with ZCCHC4. In terms of processing, phosphorylated by NEK6. Polyufmylated by the UFM1-conjugating system composed of the enzymes UBA5, UFC1 and UFL1. Deufmylated by the protease UFSP2. Ufmylation of TRIP4 is promoted by ligand-bound nuclear receptors that compete with UFSP2 for interaction with TRIP4. Nuclear receptors-induced ufmylation promotes the recruitment of additional transcriptional coactivators like EP300 and NCOA1 and therefore the assembly of a coactivator complex facilitating nuclear receptor-mediated transcription.

It is found in the nucleus. Its subcellular location is the cytoplasm. It localises to the cytosol. The protein localises to the cytoskeleton. The protein resides in the microtubule organizing center. It is found in the centrosome. In terms of biological role, transcription coactivator which associates with nuclear receptors, transcriptional coactivators including EP300, CREBBP and NCOA1, and basal transcription factors like TBP and TFIIA to facilitate nuclear receptors-mediated transcription. May thereby play an important role in establishing distinct coactivator complexes under different cellular conditions. Plays a role in thyroid hormone receptor and estrogen receptor transactivation. Also involved in androgen receptor transactivation. Plays a pivotal role in the transactivation of NF-kappa-B, SRF and AP1. Acts as a mediator of transrepression between nuclear receptor and either AP1 or NF-kappa-B. May play a role in the development of neuromuscular junction. May play a role in late myogenic differentiation. Also functions as part of the RQC trigger (RQT) complex that activates the ribosome quality control (RQC) pathway, a pathway that degrades nascent peptide chains during problematic translation. The sequence is that of Activating signal cointegrator 1 from Homo sapiens (Human).